A 750-amino-acid chain; its full sequence is Photosystem I P700 chlorophyll a apoprotein A1 (750 aa).

8 helical membrane passes run 70–93 (VFSA…FHGA), 156–179 (LYCT…FHYH), 195–219 (LNHH…HVSL), 291–309 (IIHH…GHMY), 346–369 (WHAQ…HHMY), 385–411 (LSLF…IFMV), 433–455 (AIIS…LYIH), and 531–549 (FLVH…LILL). 2 residues coordinate [4Fe-4S] cluster: cysteine 573 and cysteine 582. The next 2 membrane-spanning stretches (helical) occupy residues 589-610 (HVFL…HFSW) and 664-686 (LSAY…MFLF). Histidine 675 contributes to the chlorophyll a' binding site. Chlorophyll a is bound by residues methionine 683 and tyrosine 691. Residue tryptophan 692 participates in phylloquinone binding. A helical transmembrane segment spans residues 724–744 (AVGVTHYLLGGIATTWAFFLA).

It belongs to the PsaA/PsaB family. As to quaternary structure, the PsaA/B heterodimer binds the P700 chlorophyll special pair and subsequent electron acceptors. PSI consists of a core antenna complex that captures photons, and an electron transfer chain that converts photonic excitation into a charge separation. The eukaryotic PSI reaction center is composed of at least 11 subunits. Requires P700 is a chlorophyll a/chlorophyll a' dimer, A0 is one or more chlorophyll a, A1 is one or both phylloquinones and FX is a shared 4Fe-4S iron-sulfur center. as cofactor.

The protein localises to the plastid. It localises to the chloroplast thylakoid membrane. The catalysed reaction is reduced [plastocyanin] + hnu + oxidized [2Fe-2S]-[ferredoxin] = oxidized [plastocyanin] + reduced [2Fe-2S]-[ferredoxin]. PsaA and PsaB bind P700, the primary electron donor of photosystem I (PSI), as well as the electron acceptors A0, A1 and FX. PSI is a plastocyanin-ferredoxin oxidoreductase, converting photonic excitation into a charge separation, which transfers an electron from the donor P700 chlorophyll pair to the spectroscopically characterized acceptors A0, A1, FX, FA and FB in turn. Oxidized P700 is reduced on the lumenal side of the thylakoid membrane by plastocyanin. This chain is Photosystem I P700 chlorophyll a apoprotein A1, found in Phaseolus vulgaris (Kidney bean).